The sequence spans 284 residues: MTIVNLAAYHFVSLDTNEQWRPLVTARCNELGLRGTILLAPEGINLFIAGTREAADAFIAYLRHDPLFEGKFATLQFKESLSDSQPFRRMLVRLKREIITMKKPAIKPELGRAPFVDAQTLKTWLDRGHDDTGRPVVMLDTRNAFEVDVGTFDDALDYRIDKFSEFPEVIDANRADLEGKTVVSFCTGGIRCEKAAIHMKEIGIENVYQLEGGILKYFEEVGGAHYHGDCFVFDYRTALNPQLQPTENVTCFACRAVVTPEAQQSPSFVPGQSCPACAPAASAA.

In terms of domain architecture, Rhodanese spans 132–226; the sequence is TGRPVVMLDT…YFEEVGGAHY (95 aa). Cys186 acts as the Cysteine persulfide intermediate in catalysis.

It belongs to the TrhO family.

It catalyses the reaction uridine(34) in tRNA + AH2 + O2 = 5-hydroxyuridine(34) in tRNA + A + H2O. Its function is as follows. Catalyzes oxygen-dependent 5-hydroxyuridine (ho5U) modification at position 34 in tRNAs. The protein is tRNA uridine(34) hydroxylase of Burkholderia lata (strain ATCC 17760 / DSM 23089 / LMG 22485 / NCIMB 9086 / R18194 / 383).